Here is a 355-residue protein sequence, read N- to C-terminus: MDQFPESVTENFEYDDLAEACYIGDIVVFGTVFLSIFYSVIFAIGLVGNLLVVFALTNSKKPKSVTDIYLLNLALSDLLFVATLPFWTHYLINEKGLHNAMCKFTTAFFFIGFFGSIFFITVISIDRYLAIVLAANSMNNRTVQHGVTISLGVWAAAILVAAPQFMFTKQKENECLGDYPEVLQEIWPVLRNVETNFLGFLLPLLIMSYCYFRIIQTLFSCKNHKKAKAIKLILLVVIVFFLFWTPYNVMIFLETLKLYDFFPSCDMRKDLRLALSVTETVAFSHCCLNPLIYAFAGEKFRRYLYHLYGKCLAVLCGRSVHVDFSSSESQRSRHGSVLSSNFTYHTSDGDALLLL.

At Met-1–Thr-31 the chain is on the extracellular side. A helical transmembrane segment spans residues Val-32–Ser-59. At Lys-60–Tyr-69 the chain is on the cytoplasmic side. A helical membrane pass occupies residues Leu-70–Tyr-90. Topologically, residues Leu-91 to Lys-103 are extracellular. Cys-102 and Cys-175 are oxidised to a cystine. The helical transmembrane segment at Phe-104–Ile-125 threads the bilayer. The Cytoplasmic portion of the chain corresponds to Asp-126–Thr-142. Residues Val-143–Phe-167 form a helical membrane-spanning segment. Residues Thr-168–Thr-195 lie on the Extracellular side of the membrane. The chain crosses the membrane as a helical span at residues Asn-196 to Ile-215. Topologically, residues Gln-216–Lys-231 are cytoplasmic. The chain crosses the membrane as a helical span at residues Leu-232–Leu-256. Topologically, residues Lys-257 to Leu-273 are extracellular. The chain crosses the membrane as a helical span at residues Ala-274 to Gly-297. At Glu-298 to Leu-355 the chain is on the cytoplasmic side. The residue at position 346 (Thr-346) is a Phosphothreonine.

It belongs to the G-protein coupled receptor 1 family. In terms of assembly, found in a ternary complex with CX3CL1 and ITGAV:ITGB3 or ITGA4:ITGB1. As to quaternary structure, (Microbial infection) Interacts with human respiratory syncytial virus (HRSV) protein G; this interaction modulates host immune response. (Microbial infection) Interacts with HIV-1 envelope polyprotein gp160. In terms of processing, this protein is not N-glycosylated which is unusual for G-protein-coupled receptors. Expressed in lymphoid and neural tissues. Expressed in lymphocyte subsets, such as natural killer (NK) cells, gamma-delta T-cells and terminally differentiated CD8(+) T-cells. Expressed in smooth muscle cells in atherosclerotic plaques.

Its subcellular location is the cell membrane. Functionally, receptor for the C-X3-C chemokine fractalkine (CX3CL1) present on many early leukocyte cells; CX3CR1-CX3CL1 signaling exerts distinct functions in different tissue compartments, such as immune response, inflammation, cell adhesion and chemotaxis. CX3CR1-CX3CL1 signaling mediates cell migratory functions. Responsible for the recruitment of natural killer (NK) cells to inflamed tissues. Acts as a regulator of inflammation process leading to atherogenesis by mediating macrophage and monocyte recruitment to inflamed atherosclerotic plaques, promoting cell survival. Involved in airway inflammation by promoting interleukin 2-producing T helper (Th2) cell survival in inflamed lung. Involved in the migration of circulating monocytes to non-inflamed tissues, where they differentiate into macrophages and dendritic cells. Acts as a negative regulator of angiogenesis, probably by promoting macrophage chemotaxis. Plays a key role in brain microglia by regulating inflammatory response in the central nervous system (CNS) and regulating synapse maturation. Required to restrain the microglial inflammatory response in the CNS and the resulting parenchymal damage in response to pathological stimuli. Involved in brain development by participating in synaptic pruning, a natural process during which brain microglia eliminates extra synapses during postnatal development. Synaptic pruning by microglia is required to promote the maturation of circuit connectivity during brain development. Acts as an important regulator of the gut microbiota by controlling immunity to intestinal bacteria and fungi. Expressed in lamina propria dendritic cells in the small intestine, which form transepithelial dendrites capable of taking up bacteria in order to provide defense against pathogenic bacteria. Required to initiate innate and adaptive immune responses against dissemination of commensal fungi (mycobiota) component of the gut: expressed in mononuclear phagocytes (MNPs) and acts by promoting induction of antifungal IgG antibodies response to confer protection against disseminated C.albicans or C.auris infection. Also acts as a receptor for C-C motif chemokine CCL26, inducing cell chemotaxis. Its function is as follows. (Microbial infection) Acts as a coreceptor with CD4 for HIV-1 virus envelope protein. In terms of biological role, (Microbial infection) Acts as a coreceptor with CD4 for HIV-1 virus envelope protein. May have more potent HIV-1 coreceptothr activity than isoform 1. (Microbial infection) Acts as a coreceptor with CD4 for HIV-1 virus envelope protein. May have more potent HIV-1 coreceptor activity than isoform 1. This is CX3C chemokine receptor 1 from Homo sapiens (Human).